Here is a 158-residue protein sequence, read N- to C-terminus: NAD(P)H-quinone oxidoreductase subunit N (158 aa).

The protein belongs to the complex I NdhN subunit family. NDH-1 can be composed of about 15 different subunits; different subcomplexes with different compositions have been identified which probably have different functions.

The protein localises to the cellular thylakoid membrane. It carries out the reaction a plastoquinone + NADH + (n+1) H(+)(in) = a plastoquinol + NAD(+) + n H(+)(out). The enzyme catalyses a plastoquinone + NADPH + (n+1) H(+)(in) = a plastoquinol + NADP(+) + n H(+)(out). Its function is as follows. NDH-1 shuttles electrons from an unknown electron donor, via FMN and iron-sulfur (Fe-S) centers, to quinones in the respiratory and/or the photosynthetic chain. The immediate electron acceptor for the enzyme in this species is believed to be plastoquinone. Couples the redox reaction to proton translocation, and thus conserves the redox energy in a proton gradient. Cyanobacterial NDH-1 also plays a role in inorganic carbon-concentration. The chain is NAD(P)H-quinone oxidoreductase subunit N from Cyanothece sp. (strain PCC 7425 / ATCC 29141).